Reading from the N-terminus, the 167-residue chain is Lipoprotein signal peptidase (167 aa).

The next 2 membrane-spanning stretches (helical) occupy residues 56–76 and 84–104; these read FAPPFVLLMLTGAIVLGVLVF and TPIFLSAFGLIAGGGIGNMID. Catalysis depends on residues D113 and D139. A helical transmembrane segment spans residues 132 to 152; sequence WPIFNVADSAITIGACMLVLF.

This sequence belongs to the peptidase A8 family.

The protein localises to the cell inner membrane. It carries out the reaction Release of signal peptides from bacterial membrane prolipoproteins. Hydrolyzes -Xaa-Yaa-Zaa-|-(S,diacylglyceryl)Cys-, in which Xaa is hydrophobic (preferably Leu), and Yaa (Ala or Ser) and Zaa (Gly or Ala) have small, neutral side chains.. It participates in protein modification; lipoprotein biosynthesis (signal peptide cleavage). This protein specifically catalyzes the removal of signal peptides from prolipoproteins. The protein is Lipoprotein signal peptidase of Chlorobium luteolum (strain DSM 273 / BCRC 81028 / 2530) (Pelodictyon luteolum).